The primary structure comprises 741 residues: G2 and S phase-expressed protein 1 (741 aa).

At S73 the chain carries Phosphoserine. 3 disordered regions span residues 101 to 120, 131 to 428, and 450 to 512; these read EVAQ…ETFV, EKEQ…KTVS, and FKVP…STRR. Over residues 106–120 the composition is skewed to polar residues; that stretch reads ATPQNPVNQGKETFV. A compositionally biased stretch (basic and acidic residues) spans 131-147; that stretch reads EKEQKRDRSPMSLKRET. Phosphoserine is present on residues S139, S153, S191, and S245. Positions 173 to 209 are enriched in polar residues; sequence SPVSAGPAQTQSNQGLPCSSQPLPRESSTSQPPSQAG. Positions 246 to 261 are enriched in polar residues; that stretch reads IQRTKLVNEKGSQSDV. Low complexity predominate over residues 310–321; the sequence is SSTSGSASSLES. A Phosphoserine modification is found at S311. Positions 337-355 are enriched in polar residues; sequence QRSSIPASGSQRRTSTSKS. A compositionally biased stretch (low complexity) spans 360 to 372; it reads PAASRQALPAAPA. The segment covering 398–408 has biased composition (polar residues); it reads SPLTQQPQTPE. S460 is modified (phosphoserine). T465 is subject to Phosphothreonine. Phosphoserine occurs at positions 476, 493, 509, and 514. Positions 478–497 are enriched in low complexity; the sequence is TPASRVVSSTPVRRSSGTTP. A Phosphothreonine modification is found at T518. Residues S521, S541, S582, and S599 each carry the phosphoserine modification. The disordered stretch occupies residues 550 to 640; sequence LSSEPRRRST…VHGGGCSHTP (91 aa). The span at 578–593 shows a compositional bias: low complexity; sequence QGLSSDESSSPPSSVP. T696 carries the phosphothreonine modification. 3 positions are modified to phosphoserine: S720, S726, and S736.

Phosphorylated in mitosis.

Its subcellular location is the cytoplasm. It is found in the cytoskeleton. In terms of biological role, may be involved in p53-induced cell cycle arrest in G2/M phase by interfering with microtubule rearrangements that are required to enter mitosis. Overexpression delays G2/M phase progression. The chain is G2 and S phase-expressed protein 1 (Gtse1) from Mus musculus (Mouse).